The sequence spans 84 residues: Exodeoxyribonuclease 7 small subunit (84 aa).

It belongs to the XseB family. As to quaternary structure, heterooligomer composed of large and small subunits.

It localises to the cytoplasm. The enzyme catalyses Exonucleolytic cleavage in either 5'- to 3'- or 3'- to 5'-direction to yield nucleoside 5'-phosphates.. Bidirectionally degrades single-stranded DNA into large acid-insoluble oligonucleotides, which are then degraded further into small acid-soluble oligonucleotides. The protein is Exodeoxyribonuclease 7 small subunit of Janthinobacterium sp. (strain Marseille) (Minibacterium massiliensis).